A 463-amino-acid chain; its full sequence is Succinate--CoA ligase [ADP-forming] subunit beta, mitochondrial (463 aa).

Residues 1–52 (MAASMFYGRLVAVATLRNHRPRTAQRAAAQVLGSSGLFNNHGLQVQQQQQRN) constitute a mitochondrion transit peptide. Positions 61–288 (MELLQEAGVS…SNSAYRQKKI (228 aa)) constitute an ATP-grasp domain. K78 is subject to N6-acetyllysine. Y84 bears the Phosphotyrosine mark. Residue K88 is modified to N6-acetyllysine; alternate. K88 carries the N6-succinyllysine; alternate modification. ATP contacts are provided by residues K98 and 105-107 (GRG). K129, K139, K143, and K216 each carry N6-acetyllysine. The Mg(2+) site is built by N258 and D272. S279 carries the post-translational modification Phosphoserine. Position 323 (N323) interacts with substrate. Phosphothreonine is present on T341. K368 is subject to N6-acetyllysine. Position 380-382 (380-382 (GIM)) interacts with substrate.

The protein belongs to the succinate/malate CoA ligase beta subunit family. ATP-specific subunit beta subfamily. In terms of assembly, heterodimer of an alpha and a beta subunit. The beta subunit determines specificity for ATP. Interacts with ALAS2. Mg(2+) is required as a cofactor. As to expression, widely expressed. Not expressed in liver and lung.

The protein resides in the mitochondrion. It carries out the reaction succinate + ATP + CoA = succinyl-CoA + ADP + phosphate. Its pathway is carbohydrate metabolism; tricarboxylic acid cycle; succinate from succinyl-CoA (ligase route): step 1/1. With respect to regulation, inhibited by itaconate. ATP-specific succinyl-CoA synthetase functions in the citric acid cycle (TCA), coupling the hydrolysis of succinyl-CoA to the synthesis of ATP and thus represents the only step of substrate-level phosphorylation in the TCA. The beta subunit provides nucleotide specificity of the enzyme and binds the substrate succinate, while the binding sites for coenzyme A and phosphate are found in the alpha subunit. This chain is Succinate--CoA ligase [ADP-forming] subunit beta, mitochondrial, found in Homo sapiens (Human).